Reading from the N-terminus, the 658-residue chain is Interferon-induced GTP-binding protein Mx1 (658 aa).

At Met1 the chain carries N-acetylmethionine. The interval Met1–Leu20 is disordered. The Dynamin-type G domain occupies Asp65 to Pro338. The tract at residues Gly75–Ser82 is G1 motif. Gly75–Ser82 lines the GTP pocket. The interval Val100–Arg102 is G2 motif. The interval Asp176–Gly179 is G3 motif. GTP-binding positions include Asp176 to Ile180 and Thr245 to Asp248. Residues Thr245–Asp248 are G4 motif. Residues Lys277 to Gly280 are G5 motif. Residues Leu339–Glu364 are bundle signaling element (BSE). Residues Glu364–Cys531 form a middle domain region. The interval Glu365–Glu628 is stalk. The interval Lys551–Lys554 is critical for lipid-binding. Positions Leu570–Gly658 constitute a GED domain.

Belongs to the TRAFAC class dynamin-like GTPase superfamily. Dynamin/Fzo/YdjA family. Homooligomer. Oligomerizes into multimeric filamentous or ring-like structures by virtue of its stalk domain. Oligomerization is critical for GTPase activity, protein stability, and recognition of viral target structures. Interacts with TRPC1, TRPC3, TRPC4, TRPC5, TRPC6 and TRPC7. Interacts with HSPA5. Interacts with TUBB/TUBB5. Interacts with DDX39A and DDX39B. ISGylated.

It is found in the cytoplasm. Its subcellular location is the endoplasmic reticulum membrane. The protein resides in the perinuclear region. Functionally, interferon-induced dynamin-like GTPase with antiviral activity. The sequence is that of Interferon-induced GTP-binding protein Mx1 (MX1) from Otaria byronia (South American sea lion).